A 152-amino-acid chain; its full sequence is Transcriptional regulator MraZ (152 aa).

2 SpoVT-AbrB domains span residues 5 to 52 (ATLV…PLPE) and 81 to 124 (ASEC…DEQT).

The protein belongs to the MraZ family. As to quaternary structure, forms oligomers.

It is found in the cytoplasm. It localises to the nucleoid. Its function is as follows. Negatively regulates its own expression and that of the subsequent genes in the proximal part of the division and cell wall (dcw) gene cluster. Acts by binding directly to DNA. May also regulate the expression of genes outside the dcw cluster. The protein is Transcriptional regulator MraZ of Pectobacterium atrosepticum (strain SCRI 1043 / ATCC BAA-672) (Erwinia carotovora subsp. atroseptica).